The following is a 101-amino-acid chain: Small ribosomal subunit protein uS14 (101 aa).

The disordered stretch occupies residues 1–20 (MAKTSAVNRNKMRERMASRD). The segment covering 11 to 20 (KMRERMASRD) has biased composition (basic and acidic residues).

The protein belongs to the universal ribosomal protein uS14 family. In terms of assembly, part of the 30S ribosomal subunit. Contacts proteins S3 and S10.

Its function is as follows. Binds 16S rRNA, required for the assembly of 30S particles and may also be responsible for determining the conformation of the 16S rRNA at the A site. This Granulibacter bethesdensis (strain ATCC BAA-1260 / CGDNIH1) protein is Small ribosomal subunit protein uS14.